Reading from the N-terminus, the 173-residue chain is Alpha-crystallin A chain (173 aa).

Methionine 1 bears the N-acetylmethionine mark. The required for complex formation with BFSP1 and BFSP2 stretch occupies residues methionine 1–glutamate 63. Glutamine 6 is subject to Deamidated glutamine; partial. Serine 45 is subject to Phosphoserine. The residue at position 50 (glutamine 50) is a Deamidated glutamine; partial. The 111-residue stretch at leucine 52–serine 162 folds into the sHSP domain. N6-acetyllysine is present on residues lysine 70 and lysine 99. Residue histidine 100 coordinates Zn(2+). The residue at position 101 (asparagine 101) is a Deamidated asparagine; partial. Zn(2+) is bound by residues glutamate 102 and histidine 107. Serine 122 is modified (phosphoserine). Residue asparagine 123 is modified to Deamidated asparagine; partial. Residues lysine 145 to serine 173 are disordered. Glutamine 147 is modified (deamidated glutamine; partial). Residues glycine 153 to proline 167 are compositionally biased toward basic and acidic residues. Residue histidine 154 participates in Zn(2+) binding. The O-linked (GlcNAc) serine glycan is linked to serine 162.

The protein belongs to the small heat shock protein (HSP20) family. As to quaternary structure, heteromer composed of three CRYAA and one CRYAB subunits. Inter-subunit bridging via zinc ions enhances stability, which is crucial as there is no protein turn over in the lens. Can also form homodimers and homotetramers (dimers of dimers) which serve as the building blocks of homooligomers. Within homooligomers, the zinc-binding motif is created from residues of 3 different molecules. His-100 and Glu-102 from one molecule are ligands of the zinc ion, and His-107 and His-154 residues from additional molecules complete the site with tetrahedral coordination geometry. Part of a complex required for lens intermediate filament formation composed of BFSP1, BFSP2 and CRYAA. Post-translationally, acetylation at Lys-70 may increase chaperone activity. Undergoes age-dependent proteolytical cleavage at the C-terminus.

It is found in the cytoplasm. The protein resides in the nucleus. Its function is as follows. Contributes to the transparency and refractive index of the lens. Acts as a chaperone, preventing aggregation of various proteins under a wide range of stress conditions. Required for the correct formation of lens intermediate filaments as part of a complex composed of BFSP1, BFSP2 and CRYAA. The chain is Alpha-crystallin A chain (CRYAA) from Meriones unguiculatus (Mongolian jird).